Here is a 310-residue protein sequence, read N- to C-terminus: 5'-adenylylsulfate reductase-like 4 (310 aa).

The signal sequence occupies residues 1–22; the sequence is MEKEILLLLLVIMFLTVADVDA. The Thioredoxin domain maps to 49–168; sequence GVESDERPRF…LVAFYSDVTG (120 aa). N143 and N190 each carry an N-linked (GlcNAc...) asparagine glycan. Residues 217-237 form a helical membrane-spanning segment; that stretch reads LAIVFVLLRLLHLIYPTLVVF.

Its subcellular location is the membrane. This is 5'-adenylylsulfate reductase-like 4 (APRL4) from Arabidopsis thaliana (Mouse-ear cress).